Reading from the N-terminus, the 356-residue chain is Septin-2A (356 aa).

In terms of domain architecture, Septin-type G spans 33–305; that stretch reads KGFEFTLMVV…ENFRSERLKK (273 aa). Residues 43–50 form a G1 motif region; sequence GESGLGKS. GTP contacts are provided by residues 43–50, Thr77, Gly103, 182–190, Gly240, and Arg255; these read GESGLGKS and KADTLTLRE. Residues 100-103 form a G3 motif region; that stretch reads DTPG. The G4 motif stretch occupies residues 181 to 184; the sequence is AKAD. Positions 259-269 are important for dimerization; the sequence is WGVVEVENTEH.

It belongs to the TRAFAC class TrmE-Era-EngA-EngB-Septin-like GTPase superfamily. Septin GTPase family. As to quaternary structure, septins polymerize into heterooligomeric protein complexes that form filaments, and associate with cellular membranes, actin filaments and microtubules. GTPase activity is required for filament formation. Can form heterooligomers with other family members and form filaments. Interacts with wdpcp.

It is found in the cytoplasm. The protein localises to the cytoskeleton. The protein resides in the spindle. It localises to the cleavage furrow. Its subcellular location is the midbody. It is found in the cell projection. The protein localises to the cilium membrane. Its function is as follows. Filament-forming cytoskeletal GTPase. Required for normal organization of the actin cytoskeleton. Plays a role in the biogenesis of polarized columnar-shaped epithelium. Required for the progression through mitosis through regulation of chromosome congression. During anaphase, may be required for chromosome segregation and spindle elongation. Probably plays a role in ciliogenesis and collective cell movements including convergent extension during gastrulation. In cilia, required for the integrity of the diffusion barrier at the base of the primary cilium that prevents diffusion of transmembrane proteins between the cilia and plasma membranes. Controls cell shape and not polarization of cells during convergent extension. This chain is Septin-2A (sept2-a), found in Xenopus laevis (African clawed frog).